A 491-amino-acid chain; its full sequence is Allene oxide synthase 3 (491 aa).

Heme b contacts are provided by K104, H135, and K139. Residues N296 and K302 each contribute to the (13S)-hydroperoxy-(9Z,11E)-octadecadienoate site. N296 contacts (13S)-hydroperoxy-(9Z,11E,15Z)-octadecatrienoate. Positions 442 and 444 each coordinate heme b.

It belongs to the cytochrome P450 family. Requires heme b as cofactor. Expressed in roots. Not detected in aerial tissues, including cotyledons, leaves, stems and flower buds.

It carries out the reaction (13S)-hydroperoxy-(9Z,11E,15Z)-octadecatrienoate = (9Z,13S,15Z)-12,13-epoxyoctadeca-9,11,15-trienoate + H2O. The catalysed reaction is (13S)-hydroperoxy-(9Z,11E)-octadecadienoate = (9Z,13S)-12,13-epoxyoctadeca-9,11-dienoate + H2O. It catalyses the reaction (9Z,13S,15Z)-12,13-epoxyoctadeca-9,11,15-trienoate = (9S,13S,15Z)-12-oxophyto-10,15-dienoate. Functionally, cytochrome P450 metabolizing both 13- and 9-hydroperoxides of linoleic and linolenic acids, but with a marked preference for 9-hydroperoxy fatty acids. Catalyzes not only the synthesis of allene oxide, but also its hydrolysis and cyclization. The first step is the synthesis of (12Z)-9,10-epoxyoctadeca-10,12-dienoic acid (9,10-EOD) and the final products are (9R)-alpha-ketol and the racemic cis-10-oxo-11-phytoenoic acid. The cyclase activity possesses regiospecificity and (9Z)-12,13-epoxyoctadeca-9,11-dienoic acid (12,13-EOD) is significantly less efficient as a substrate for cyclopentenone production than 9,10-EOD. Has no hydroperoxide lyase activity. May play a defensive role against soil-borne pests that affect roots or juvenile tissues as they emerge from the germinating seed. In Solanum lycopersicum (Tomato), this protein is Allene oxide synthase 3.